A 248-amino-acid chain; its full sequence is 1-(5-phosphoribosyl)-5-[(5-phosphoribosylamino)methylideneamino] imidazole-4-carboxamide isomerase (248 aa).

Residue Asp-8 is the Proton acceptor of the active site. The active-site Proton donor is the Asp-131.

Belongs to the HisA/HisF family.

The protein resides in the cytoplasm. It catalyses the reaction 1-(5-phospho-beta-D-ribosyl)-5-[(5-phospho-beta-D-ribosylamino)methylideneamino]imidazole-4-carboxamide = 5-[(5-phospho-1-deoxy-D-ribulos-1-ylimino)methylamino]-1-(5-phospho-beta-D-ribosyl)imidazole-4-carboxamide. It functions in the pathway amino-acid biosynthesis; L-histidine biosynthesis; L-histidine from 5-phospho-alpha-D-ribose 1-diphosphate: step 4/9. The chain is 1-(5-phosphoribosyl)-5-[(5-phosphoribosylamino)methylideneamino] imidazole-4-carboxamide isomerase from Cupriavidus taiwanensis (strain DSM 17343 / BCRC 17206 / CCUG 44338 / CIP 107171 / LMG 19424 / R1) (Ralstonia taiwanensis (strain LMG 19424)).